A 449-amino-acid polypeptide reads, in one-letter code: Trigger factor (449 aa).

Residues 160–231 (TDQVTIEELG…VQSVQTKQLQ (72 aa)) form the PPIase FKBP-type domain. The disordered stretch occupies residues 411-449 (GQQVAGRQEAGAEQTAQAAEQESGQPQAEGEQAAEQRGE). Positions 415-443 (AGRQEAGAEQTAQAAEQESGQPQAEGEQA) are enriched in low complexity.

It belongs to the FKBP-type PPIase family. Tig subfamily.

Its subcellular location is the cytoplasm. It catalyses the reaction [protein]-peptidylproline (omega=180) = [protein]-peptidylproline (omega=0). Its function is as follows. Involved in protein export. Acts as a chaperone by maintaining the newly synthesized protein in an open conformation. Functions as a peptidyl-prolyl cis-trans isomerase. This Deinococcus geothermalis (strain DSM 11300 / CIP 105573 / AG-3a) protein is Trigger factor.